We begin with the raw amino-acid sequence, 592 residues long: Methylenetetrahydrofolate reductase (NADH) 1 (592 aa).

Catalysis depends on Glu-21, which acts as the Proton donor/acceptor. NAD(+) is bound by residues 21–26 (EFFPPK) and 52–53 (TW). FAD contacts are provided by residues 52–53 (TW), His-81, 111–113 (RGD), Tyr-153, 157–160 (HPDV), Asp-175, and Lys-182. Residue Asp-113 coordinates substrate. 2 residues coordinate substrate: Gln-193 and Tyr-285.

Belongs to the methylenetetrahydrofolate reductase family. As to quaternary structure, homodimer. FAD serves as cofactor.

It catalyses the reaction (6S)-5-methyl-5,6,7,8-tetrahydrofolate + NAD(+) = (6R)-5,10-methylene-5,6,7,8-tetrahydrofolate + NADH + H(+). The protein operates within one-carbon metabolism; tetrahydrofolate interconversion. Plant MTHFRs strongly prefer NADH over NADPH. Not inhibited by methionine or S-adenosylmethionine. The probable reversibility of the MTHFR reaction in plants suggests that they can metabolize the methyl group of 5,10-methylenetetrahydrofolate to serine, sugars and starch. The chain is Methylenetetrahydrofolate reductase (NADH) 1 (MTHFR1) from Arabidopsis thaliana (Mouse-ear cress).